A 104-amino-acid chain; its full sequence is Probable guanidinium efflux system subunit GdnD (104 aa).

Helical transmembrane passes span Trp3–Phe23, Trp31–Glu51, Ala58–Tyr78, and Gly84–Ser104.

This sequence belongs to the drug/metabolite transporter (DMT) superfamily. Small multidrug resistance (SMR) (TC 2.A.7.1) family. YkkC/YkkD subfamily. The efflux pump is composed of GdnC and GdnD.

The protein localises to the cell membrane. Its function is as follows. Probably involved in guanidinium transport. This chain is Probable guanidinium efflux system subunit GdnD, found in Bacillus licheniformis (strain ATCC 14580 / DSM 13 / JCM 2505 / CCUG 7422 / NBRC 12200 / NCIMB 9375 / NCTC 10341 / NRRL NRS-1264 / Gibson 46).